Reading from the N-terminus, the 233-residue chain is Small ribosomal subunit protein uS2 (233 aa).

It belongs to the universal ribosomal protein uS2 family.

In Bacillus cereus (strain G9842), this protein is Small ribosomal subunit protein uS2.